Reading from the N-terminus, the 313-residue chain is tRNA dimethylallyltransferase (313 aa).

8–15 contributes to the ATP binding site; it reads GPTGTGKS. 10–15 lines the substrate pocket; that stretch reads TGTGKS.

Belongs to the IPP transferase family. In terms of assembly, monomer. Requires Mg(2+) as cofactor.

The catalysed reaction is adenosine(37) in tRNA + dimethylallyl diphosphate = N(6)-dimethylallyladenosine(37) in tRNA + diphosphate. Its function is as follows. Catalyzes the transfer of a dimethylallyl group onto the adenine at position 37 in tRNAs that read codons beginning with uridine, leading to the formation of N6-(dimethylallyl)adenosine (i(6)A). This Mycolicibacterium gilvum (strain PYR-GCK) (Mycobacterium gilvum (strain PYR-GCK)) protein is tRNA dimethylallyltransferase.